A 322-amino-acid polypeptide reads, in one-letter code: Ribosomal RNA small subunit methyltransferase H (322 aa).

Residues 34–36, Asp-59, Phe-86, Asp-112, and Gln-119 each bind S-adenosyl-L-methionine; that span reads GGH.

This sequence belongs to the methyltransferase superfamily. RsmH family.

The protein resides in the cytoplasm. The catalysed reaction is cytidine(1402) in 16S rRNA + S-adenosyl-L-methionine = N(4)-methylcytidine(1402) in 16S rRNA + S-adenosyl-L-homocysteine + H(+). Its function is as follows. Specifically methylates the N4 position of cytidine in position 1402 (C1402) of 16S rRNA. The polypeptide is Ribosomal RNA small subunit methyltransferase H (Chlorobium limicola (strain DSM 245 / NBRC 103803 / 6330)).